Here is a 677-residue protein sequence, read N- to C-terminus: Methionine--tRNA ligase (677 aa).

The 'HIGH' region motif lies at 15-25 (PYANGSIHLGH). Cys-146, Cys-149, Cys-159, and Cys-162 together coordinate Zn(2+). Positions 333–337 (KMSKS) match the 'KMSKS' region motif. An ATP-binding site is contributed by Lys-336. Residues 575–677 (DFAKVDLRVA…DGAKPGQQVK (103 aa)) enclose the tRNA-binding domain.

Belongs to the class-I aminoacyl-tRNA synthetase family. MetG type 1 subfamily. In terms of assembly, homodimer. The cofactor is Zn(2+).

The protein resides in the cytoplasm. The catalysed reaction is tRNA(Met) + L-methionine + ATP = L-methionyl-tRNA(Met) + AMP + diphosphate. Is required not only for elongation of protein synthesis but also for the initiation of all mRNA translation through initiator tRNA(fMet) aminoacylation. The polypeptide is Methionine--tRNA ligase (Salmonella arizonae (strain ATCC BAA-731 / CDC346-86 / RSK2980)).